A 180-amino-acid polypeptide reads, in one-letter code: MKEHVLNQKKAVVEEIKGHINDAKSMVIVDYRGLDVSEATELREKFRNENVLFKVYKNTMMNFAFKELGFEGFLDYLSGPNAVAFSMDDPIAAARIAKEFAADHENLEIKAGYLGDKFLDVEGVKKIASIPSREVLLTKMLGSFKAPVSKFVYLADAIAKSKAEGSEETESNETTETVEE.

The disordered stretch occupies residues serine 161–glutamate 180. The span at serine 166 to glutamate 180 shows a compositional bias: acidic residues.

It belongs to the universal ribosomal protein uL10 family. Part of the ribosomal stalk of the 50S ribosomal subunit. The N-terminus interacts with L11 and the large rRNA to form the base of the stalk. The C-terminus forms an elongated spine to which L12 dimers bind in a sequential fashion forming a multimeric L10(L12)X complex.

Its function is as follows. Forms part of the ribosomal stalk, playing a central role in the interaction of the ribosome with GTP-bound translation factors. In Finegoldia magna (strain ATCC 29328 / DSM 20472 / WAL 2508) (Peptostreptococcus magnus), this protein is Large ribosomal subunit protein uL10.